The sequence spans 248 residues: 1-(5-phosphoribosyl)-5-[(5-phosphoribosylamino)methylideneamino] imidazole-4-carboxamide isomerase (248 aa).

Catalysis depends on D8, which acts as the Proton acceptor. D131 serves as the catalytic Proton donor.

It belongs to the HisA/HisF family.

The protein localises to the cytoplasm. The enzyme catalyses 1-(5-phospho-beta-D-ribosyl)-5-[(5-phospho-beta-D-ribosylamino)methylideneamino]imidazole-4-carboxamide = 5-[(5-phospho-1-deoxy-D-ribulos-1-ylimino)methylamino]-1-(5-phospho-beta-D-ribosyl)imidazole-4-carboxamide. It participates in amino-acid biosynthesis; L-histidine biosynthesis; L-histidine from 5-phospho-alpha-D-ribose 1-diphosphate: step 4/9. This is 1-(5-phosphoribosyl)-5-[(5-phosphoribosylamino)methylideneamino] imidazole-4-carboxamide isomerase from Nitrosomonas eutropha (strain DSM 101675 / C91 / Nm57).